Here is a 133-residue protein sequence, read N- to C-terminus: MGLTSQLIPTLVCLLVCTSNFAHGHKCDITLQEIIKTLNTLTARKNSCMELTVADVFAAPKNTTEKETFCKAATALRHIYRHHNCLSKHLSGLDRNLSGLANTTCSVNDSKKSTLRDFLERLKKIMKEKYSKC.

A signal peptide spans Met1–Gly24. 3 cysteine pairs are disulfide-bonded: Cys27/Cys133, Cys48/Cys85, and Cys70/Cys105. 4 N-linked (GlcNAc...) asparagine glycosylation sites follow: Asn62, Asn96, Asn102, and Asn108.

It belongs to the IL-4/IL-13 family.

Its subcellular location is the secreted. In terms of biological role, participates in at least several B-cell activation processes as well as of other cell types. It is a costimulator of DNA-synthesis. It induces the expression of class II MHC molecules on resting B-cells. It enhances both secretion and cell surface expression of IgE and IgG1. It also regulates the expression of the low affinity Fc receptor for IgE (CD23) on both lymphocytes and monocytes. Positively regulates IL31RA expression in macrophages. Stimulates autophagy in dendritic cells by interfering with mTORC1 signaling and through the induction of RUFY4. The sequence is that of Interleukin-4 (IL4) from Lama glama (Llama).